Reading from the N-terminus, the 396-residue chain is Probable peptidoglycan glycosyltransferase FtsW (396 aa).

The Cytoplasmic segment spans residues 1–27; the sequence is MPFLDKVKQQYEDWTRITPSNLLYDRA. A helical membrane pass occupies residues 28 to 48; the sequence is LLLLFFVLLLIGLLAVSSASI. Topologically, residues 49–64 are periplasmic; that stretch reads PVGTRLFKDPFYFAKR. A helical membrane pass occupies residues 65–85; that stretch reads DAIYVFLSCVTCYLCVQVPME. Residues 86-93 are Cytoplasmic-facing; the sequence is KWEQWHVR. The helical transmembrane segment at 94 to 114 threads the bilayer; sequence LFAFAIFLLILVLIPGIGLSV. At 115 to 122 the chain is on the periplasmic side; it reads NGARRWIP. A helical transmembrane segment spans residues 123 to 143; the sequence is MVLFNFQPAEFAKLALTCFLA. At 144–157 the chain is on the cytoplasmic side; that stretch reads SYFTRKYDEVRSRK. Residues 158 to 178 traverse the membrane as a helical segment; it reads LSAFKPFALMGLMGLFLLSQP. At 179–183 the chain is on the periplasmic side; sequence DLGST. A run of 2 helical transmembrane segments spans residues 184 to 204 and 205 to 225; these read VVLF…FWQF and VGLM…SAYR. The Periplasmic portion of the chain corresponds to 226–285; that stretch reads LKRFTGFLDPFKDPYGTGFQLSNSLMAFGRGEWVGEGLGNSIQKLEYLPEAHTDFVMAVV. Residues 286-306 traverse the membrane as a helical segment; the sequence is GEEFGFLGILVIVILLGLLIF. Residues 307-323 are Cytoplasmic-facing; it reads RAMKIGRESLLLEQRFK. A helical transmembrane segment spans residues 324-344; the sequence is GFFAFGISFWIFFQGFVNLGM. At 345–355 the chain is on the periplasmic side; sequence SLGLLPTKGLT. The helical transmembrane segment at 356 to 376 threads the bilayer; the sequence is FPLISYGGSSLIIMSMTIGLL. Residues 377 to 396 lie on the Cytoplasmic side of the membrane; it reads LRIDHENRLMRIGQARLRDD.

Belongs to the SEDS family. FtsW subfamily.

It localises to the cell inner membrane. It carries out the reaction [GlcNAc-(1-&gt;4)-Mur2Ac(oyl-L-Ala-gamma-D-Glu-L-Lys-D-Ala-D-Ala)](n)-di-trans,octa-cis-undecaprenyl diphosphate + beta-D-GlcNAc-(1-&gt;4)-Mur2Ac(oyl-L-Ala-gamma-D-Glu-L-Lys-D-Ala-D-Ala)-di-trans,octa-cis-undecaprenyl diphosphate = [GlcNAc-(1-&gt;4)-Mur2Ac(oyl-L-Ala-gamma-D-Glu-L-Lys-D-Ala-D-Ala)](n+1)-di-trans,octa-cis-undecaprenyl diphosphate + di-trans,octa-cis-undecaprenyl diphosphate + H(+). Its pathway is cell wall biogenesis; peptidoglycan biosynthesis. In terms of biological role, peptidoglycan polymerase that is essential for cell division. The polypeptide is Probable peptidoglycan glycosyltransferase FtsW (Pasteurella multocida (strain Pm70)).